Consider the following 150-residue polypeptide: Small ribosomal subunit protein uS15 (150 aa).

Residues 1 to 10 (MPHRSRHKRG) show a composition bias toward basic residues. The segment at 1–21 (MPHRSRHKRGSSGSVRPATKT) is disordered.

Belongs to the universal ribosomal protein uS15 family. Part of the 30S ribosomal subunit.

This Caldivirga maquilingensis (strain ATCC 700844 / DSM 13496 / JCM 10307 / IC-167) protein is Small ribosomal subunit protein uS15.